We begin with the raw amino-acid sequence, 197 residues long: Serine recombinase gin (197 aa).

The region spanning 1 to 134 (MLIGYVRVST…AGLAAARNKG (134 aa)) is the Resolvase/invertase-type recombinase catalytic domain. S9 acts as the O-(5'-phospho-DNA)-serine intermediate in catalysis. Residues 138–181 (GRPPKLTKAEWEQAGRLLAQGIPRKQVALIYDVALSTLYKKHPA) constitute a DNA-binding region (H-T-H motif).

The protein belongs to the site-specific recombinase resolvase family. In terms of assembly, homodimer. During inversion, two dimers associate to form a homotetramer.

It is found in the host cytoplasm. Functionally, performs inversion of a viral segment (G-segment) that encodes two alternate pairs of tail fiber proteins thereby modifying the host specificity of the virus. Binds as a dimer to the viral gix sites which are 34-bp palindromic sequences that flank the invertible G-segment. Catalyzes site-specific recombination in the presence of the host factor Fis. Gin dimers bound to each of the gix sites and host factor Fis bound to the enhancer come together to form the synaptic complex. Each Gin monomer introduces a nick and becomes covalently attached to the 5'-phosphate of the DNA, resulting in double-stranded staggered breaks at both recombination sites. A 180 degrees rotation of one of the two Gin dimers followed by religation of the DNA leads to the inversion of the G-segment. The protein is Serine recombinase gin (gin) of Escherichia coli (Bacteriophage D108).